We begin with the raw amino-acid sequence, 183 residues long: Pyruvoyl-dependent arginine decarboxylase 2 (183 aa).

Serine 41 is modified (pyruvic acid (Ser)).

The protein belongs to the PdaD family. It depends on pyruvate as a cofactor.

The enzyme catalyses L-arginine + H(+) = agmatine + CO2. This Methanosarcina mazei (strain ATCC BAA-159 / DSM 3647 / Goe1 / Go1 / JCM 11833 / OCM 88) (Methanosarcina frisia) protein is Pyruvoyl-dependent arginine decarboxylase 2 (pdaD2).